Reading from the N-terminus, the 126-residue chain is Glycine cleavage system H protein (126 aa).

One can recognise a Lipoyl-binding domain in the interval 22–104 (VATIGITEYA…YEKAWMVKVE (83 aa)). K63 bears the N6-lipoyllysine mark.

Belongs to the GcvH family. As to quaternary structure, the glycine cleavage system is composed of four proteins: P, T, L and H. (R)-lipoate is required as a cofactor.

In terms of biological role, the glycine cleavage system catalyzes the degradation of glycine. The H protein shuttles the methylamine group of glycine from the P protein to the T protein. Functionally, is also involved in protein lipoylation via its role as an octanoyl/lipoyl carrier protein intermediate. This chain is Glycine cleavage system H protein, found in Staphylococcus aureus (strain MSSA476).